Here is a 238-residue protein sequence, read N- to C-terminus: Putative type I specificity subunit S.MpnORF201P (238 aa).

The protein belongs to the type-I restriction system S methylase family. The methyltransferase is composed of M and S polypeptides.

The specificity (S) subunit of a type I methyltransferase (MTase); this subunit dictates DNA sequence specificity. The single R subunit has multiple frameshifts and is probably not expressed. The sequence is that of Putative type I specificity subunit S.MpnORF201P from Mycoplasma pneumoniae (strain ATCC 29342 / M129 / Subtype 1) (Mycoplasmoides pneumoniae).